The following is a 516-amino-acid chain: Amino-acid permease BAT1 (516 aa).

The next 12 membrane-spanning stretches (helical) occupy residues Leu-33 to Thr-53, Tyr-70 to Cys-90, Pro-113 to Ser-133, Val-164 to Ile-184, Phe-189 to Ile-209, Leu-232 to Ile-252, Gly-275 to Ser-295, Phe-328 to Cys-348, Val-383 to Leu-403, Ile-406 to Ile-426, Val-452 to Val-472, and Tyr-483 to Ala-503.

Belongs to the amino acid-polyamine-organocation (APC) superfamily. Amino acid/choline transporter (ACT) (TC 2.A.3.4) family. Expressed in roots, rosette leaves, stems, cauline leaves, flowers and siliques.

Its subcellular location is the mitochondrion membrane. In terms of biological role, may play a role in primary carbon metabolism and plant growth, by mediating the transport of GABA from the cytosol to mitochondria. When expressed in a heterologous system (yeast), imports Arg and Ala across the plasma membrane and exports Lys and Glu, but does not transport proline. The protein is Amino-acid permease BAT1 (BAT1) of Arabidopsis thaliana (Mouse-ear cress).